Here is a 131-residue protein sequence, read N- to C-terminus: Small ribosomal subunit protein uS8 (131 aa).

This sequence belongs to the universal ribosomal protein uS8 family. Part of the 30S ribosomal subunit. Contacts proteins S5 and S12.

Functionally, one of the primary rRNA binding proteins, it binds directly to 16S rRNA central domain where it helps coordinate assembly of the platform of the 30S subunit. The chain is Small ribosomal subunit protein uS8 from Legionella pneumophila subsp. pneumophila (strain Philadelphia 1 / ATCC 33152 / DSM 7513).